The chain runs to 150 residues: Flagellar assembly factor FliW (150 aa).

The protein belongs to the FliW family. As to quaternary structure, interacts with translational regulator CsrA and flagellin(s).

It is found in the cytoplasm. Functionally, acts as an anti-CsrA protein, binds CsrA and prevents it from repressing translation of its target genes, one of which is flagellin. Binds to flagellin and participates in the assembly of the flagellum. This is Flagellar assembly factor FliW from Thermoanaerobacter pseudethanolicus (strain ATCC 33223 / 39E) (Clostridium thermohydrosulfuricum).